A 296-amino-acid polypeptide reads, in one-letter code: uncharacterized protein (296 aa).

Residues 1–20 (MRKFIFVLLTLLLVSPFSFA) form the signal peptide.

This is an uncharacterized protein from Escherichia coli (strain K12).